Reading from the N-terminus, the 650-residue chain is Protein KINESIN LIGHT CHAIN-RELATED 3 (650 aa).

The segment at 104–141 (EKQTGKKNVTKSNVGVGGMRKKKVGGTKLQNGNEEPSS) is disordered. The segment covering 131-141 (KLQNGNEEPSS) has biased composition (polar residues). TPR repeat units follow at residues 192–225 (IMCLHVTAAVHCKLKEYNEAIPVLQRSVEIPVVE), 235–268 (FAGLMQLGDTYAMVGQLESSISCYTEGLNIQKKV), 277–310 (GETCRYLAEALVQALRFDEAQQVCETALSIHRES), 319–353 (AADRRLMGLICETKGDHENALEHLVLASMAMAANG), 359–392 (AFVDTSIGDSYLSLSRFDEAICAYQKSLTALKTA), 401–434 (GSVYIRLADLYNRTGKVREAKSYCENALRIYESH), 444–477 (ASGLTDISVICESMNEVEQAITLLQKALKIYADS), 485–518 (AGIEAQMGVLYYMMGKYMESYNTFKSAISKLRAT), 527–560 (GIALNQMGLACIQLDAIEEAVELFEEAKCILEQE), and 569–602 (LGLYSNLAGAYDAIGRLDDAIKLLGHVVGVREEK).

Belongs to the kinesin light chain family.

The sequence is that of Protein KINESIN LIGHT CHAIN-RELATED 3 from Arabidopsis thaliana (Mouse-ear cress).